Reading from the N-terminus, the 846-residue chain is Translation initiation factor IF-2 (846 aa).

The tract at residues 198-219 (YKREEEEKKSKAKKAGGKGFKK) is disordered. A compositionally biased stretch (basic residues) spans 207 to 219 (SKAKKAGGKGFKK). One can recognise a tr-type G domain in the interval 345 to 512 (SRAPVVTIMG…AVLLQSEVLE (168 aa)). The interval 354–361 (GHVDHGKT) is G1. 354–361 (GHVDHGKT) is a binding site for GTP. Positions 379–383 (GITQH) are G2. The G3 stretch occupies residues 400 to 403 (DTPG). Residues 400-404 (DTPGH) and 454-457 (NKID) each bind GTP. Residues 454–457 (NKID) form a G4 region. The interval 490 to 492 (SAK) is G5.

It belongs to the TRAFAC class translation factor GTPase superfamily. Classic translation factor GTPase family. IF-2 subfamily.

It is found in the cytoplasm. In terms of biological role, one of the essential components for the initiation of protein synthesis. Protects formylmethionyl-tRNA from spontaneous hydrolysis and promotes its binding to the 30S ribosomal subunits. Also involved in the hydrolysis of GTP during the formation of the 70S ribosomal complex. This is Translation initiation factor IF-2 from Francisella tularensis subsp. tularensis (strain SCHU S4 / Schu 4).